We begin with the raw amino-acid sequence, 198 residues long: DNA polymerase zeta subunit 2 (198 aa).

The region spanning 4-196 is the HORMA domain; the sequence is EIKADIIVEA…DLGLKMDVLI (193 aa).

Belongs to the MAD2 family. In terms of assembly, accessory subunit of the zeta DNA polymerase complex, which consists of the catalytic component PolZ1/DNApol-zeta and PolZ2/Rev7. Interacts with the apurinic/apyrimidinic (AP) endonuclease Rrp1 (via the N-terminus).

Functionally, as the accessory component of the DNA polymerase zeta complex, involved in translesion DNA synthesis (TLS) and various DNA repair mechanisms. Promotes the apurinic/apyrimidinic (AP) endonuclease activity of Rrp1 and is therefore likely to be involved in the base excision repair (BER) pathway responsible for repair of DNA lesions. It does not appear to influence the synthesis activity of the catalytic component Dmpol-zeta. In Drosophila melanogaster (Fruit fly), this protein is DNA polymerase zeta subunit 2.